A 380-amino-acid polypeptide reads, in one-letter code: PqqA peptide cyclase (380 aa).

Residues 12–228 (FGIPLAVLLE…EEARERLKGR (217 aa)) enclose the Radical SAM core domain. Residues cysteine 26, cysteine 30, and cysteine 33 each contribute to the [4Fe-4S] cluster site.

The protein belongs to the radical SAM superfamily. PqqE family. As to quaternary structure, interacts with PqqD. The interaction is necessary for activity of PqqE. Requires [4Fe-4S] cluster as cofactor.

It carries out the reaction [PQQ precursor protein] + S-adenosyl-L-methionine = E-Y cross-linked-[PQQ precursor protein] + 5'-deoxyadenosine + L-methionine + H(+). It functions in the pathway cofactor biosynthesis; pyrroloquinoline quinone biosynthesis. In terms of biological role, catalyzes the cross-linking of a glutamate residue and a tyrosine residue in the PqqA protein as part of the biosynthesis of pyrroloquinoline quinone (PQQ). The chain is PqqA peptide cyclase from Bradyrhizobium diazoefficiens (strain JCM 10833 / BCRC 13528 / IAM 13628 / NBRC 14792 / USDA 110).